Here is a 380-residue protein sequence, read N- to C-terminus: MSWSFLTRLLDEISNHSTFVGKIWLTLFIIFRIVLTVVGGESIYYDEQSKFVCNTQQPGCENVCYDAFAPLSHVRFWVFQIILITTPTIMYLGFAMHKIARSNDVEYRPVNRKRMPMINRGRNRDYEEAEDNGEEDPMIMEEIVPEKEKAPEKSAVKHDGRRRIKRDGLMKVYILQLLSRIIFEVGFLFGQYILYGFEVAPSYVCTRSPCPHTVDCFVSRPTEKTIFLLIMYAVSCLCLSLTVLEILHLGLSGIRDAFRRRARHQSVQRPRAPICRQVPTAPPGYHTALKKDKLSLGMKPEYNLDSGRESFGDESSSRDIDRLRRHLKLAQQHLDLAYQNGESSPSRSSSPESNGTAVEQNRLNFAQEKQGSKCEKGIHA.

At M1–K22 the chain is on the cytoplasmic side. A helical membrane pass occupies residues I23–Y45. Topologically, residues D46–R75 are extracellular. The helical transmembrane segment at F76–A95 threads the bilayer. Over M96–K171 the chain is Cytoplasmic. A helical transmembrane segment spans residues V172–L194. Topologically, residues Y195–L228 are extracellular. The helical transmembrane segment at L229–L251 threads the bilayer. The Cytoplasmic segment spans residues S252–A380. The disordered stretch occupies residues A337–A380. The span at E342–S353 shows a compositional bias: low complexity. Polar residues predominate over residues N354–K369. Positions Q370 to A380 are enriched in basic and acidic residues.

It belongs to the connexin family. Gamma-type subfamily. As to quaternary structure, a connexon is composed of a hexamer of connexins.

It localises to the cell membrane. It is found in the cell junction. The protein resides in the gap junction. Functionally, one gap junction consists of a cluster of closely packed pairs of transmembrane channels, the connexons, through which materials of low MW diffuse from one cell to a neighboring cell. Participates in a developmental pathway for formation of the notochord and tail. This is Gap junction gamma-1 protein (gjc1) from Danio rerio (Zebrafish).